A 463-amino-acid chain; its full sequence is L-seryl-tRNA(Sec) selenium transferase (463 aa).

Lys-295 carries the N6-(pyridoxal phosphate)lysine modification.

The protein belongs to the SelA family. In terms of assembly, homodecamer; pentamer of dimers. Binds only one seryl-tRNA(Sec) per dimer. The cofactor is pyridoxal 5'-phosphate.

Its subcellular location is the cytoplasm. The catalysed reaction is L-seryl-tRNA(Sec) + selenophosphate + H(+) = L-selenocysteinyl-tRNA(Sec) + phosphate. It functions in the pathway aminoacyl-tRNA biosynthesis; selenocysteinyl-tRNA(Sec) biosynthesis; selenocysteinyl-tRNA(Sec) from L-seryl-tRNA(Sec) (bacterial route): step 1/1. Converts seryl-tRNA(Sec) to selenocysteinyl-tRNA(Sec) required for selenoprotein biosynthesis. This Escherichia coli O7:K1 (strain IAI39 / ExPEC) protein is L-seryl-tRNA(Sec) selenium transferase.